The following is a 287-amino-acid chain: Ret finger protein-like 4A (287 aa).

The segment at C11 to S53 adopts an RING-type; degenerate zinc-finger fold. The B30.2/SPRY domain maps to E78–G278.

In terms of assembly, interacts with PSMB1, UBE2A and CCNB1. As to expression, expressed in the ovaries and oocytes (at protein level). Expression restricted to gonads. In testis, present at later stages of spermatogeneis and abundant in elongating spermatids.

The protein localises to the cytoplasm. It is found in the nucleus. In Mus musculus (Mouse), this protein is Ret finger protein-like 4A (Rfpl4a).